We begin with the raw amino-acid sequence, 172 residues long: RNA silencing suppressor p19 (172 aa).

Residues 1-20 show a composition bias toward basic and acidic residues; that stretch reads MERAIQGNDAREQANSERWD. A disordered region spans residues 1 to 37; the sequence is MERAIQGNDAREQANSERWDGGSGGTTSPFKLPDESP.

The protein belongs to the tombusvirus protein p19 family. As to quaternary structure, homodimer.

Functionally, viral suppressor of RNA silencing which binds specifically to silencing RNAs (siRNAs). Acts as a molecular caliper to specifically select siRNAs based on the length of the duplex region of the RNA. The polypeptide is RNA silencing suppressor p19 (Tomato bushy stunt virus (strain Ja6) (TBSV)).